The sequence spans 244 residues: tRNA (guanine-N(7)-)-methyltransferase (244 aa).

The disordered stretch occupies residues 1–24; it reads MTDSHVPHPESPAVEEGEERPHRR. Positions 74, 99, 126, and 149 each coordinate S-adenosyl-L-methionine. The active site involves aspartate 149. Substrate-binding positions include lysine 153, aspartate 185, and 222–225; that span reads TKFE.

This sequence belongs to the class I-like SAM-binding methyltransferase superfamily. TrmB family.

The catalysed reaction is guanosine(46) in tRNA + S-adenosyl-L-methionine = N(7)-methylguanosine(46) in tRNA + S-adenosyl-L-homocysteine. It functions in the pathway tRNA modification; N(7)-methylguanine-tRNA biosynthesis. In terms of biological role, catalyzes the formation of N(7)-methylguanine at position 46 (m7G46) in tRNA. This Pseudomonas savastanoi pv. phaseolicola (strain 1448A / Race 6) (Pseudomonas syringae pv. phaseolicola (strain 1448A / Race 6)) protein is tRNA (guanine-N(7)-)-methyltransferase.